The sequence spans 401 residues: Anhydro-N-acetylmuramic acid kinase (401 aa).

Residue 25-32 (GTSLDGLD) participates in ATP binding.

The protein belongs to the anhydro-N-acetylmuramic acid kinase family.

It carries out the reaction 1,6-anhydro-N-acetyl-beta-muramate + ATP + H2O = N-acetyl-D-muramate 6-phosphate + ADP + H(+). Its pathway is amino-sugar metabolism; 1,6-anhydro-N-acetylmuramate degradation. It functions in the pathway cell wall biogenesis; peptidoglycan recycling. In terms of biological role, catalyzes the specific phosphorylation of 1,6-anhydro-N-acetylmuramic acid (anhMurNAc) with the simultaneous cleavage of the 1,6-anhydro ring, generating MurNAc-6-P. Is required for the utilization of anhMurNAc either imported from the medium or derived from its own cell wall murein, and thus plays a role in cell wall recycling. The sequence is that of Anhydro-N-acetylmuramic acid kinase from Pseudoalteromonas translucida (strain TAC 125).